We begin with the raw amino-acid sequence, 217 residues long: uncharacterized protein (217 aa).

7 consecutive transmembrane segments (helical) span residues 4–23 (IYGI…GKET), 44–66 (NVVI…LTWV), 76–98 (TVET…SIII), 111–128 (FLYL…IHAI), 132–154 (MAMV…PLAL), 166–188 (AGTA…IVLF), and 198–215 (LLLS…ALQL).

The protein resides in the cell membrane. This is an uncharacterized protein from Archaeoglobus fulgidus (strain ATCC 49558 / DSM 4304 / JCM 9628 / NBRC 100126 / VC-16).